Reading from the N-terminus, the 123-residue chain is MPTVNQLIRKPRVVPVKRNKVPALQANPQKRGVCTRVYTTTPKKPNSALRKVAKVRLTNGFEVIGYIPGEGHNLQEHSVVVIRGGRVKDLPGVRYHIIRGLLDTQGVKNRKQRRSKYGAKRPK.

Asp89 bears the 3-methylthioaspartic acid mark.

It belongs to the universal ribosomal protein uS12 family. Part of the 30S ribosomal subunit. Contacts proteins S8 and S17. May interact with IF1 in the 30S initiation complex.

In terms of biological role, with S4 and S5 plays an important role in translational accuracy. Functionally, interacts with and stabilizes bases of the 16S rRNA that are involved in tRNA selection in the A site and with the mRNA backbone. Located at the interface of the 30S and 50S subunits, it traverses the body of the 30S subunit contacting proteins on the other side and probably holding the rRNA structure together. The combined cluster of proteins S8, S12 and S17 appears to hold together the shoulder and platform of the 30S subunit. This Bartonella bacilliformis (strain ATCC 35685 / KC583 / Herrer 020/F12,63) protein is Small ribosomal subunit protein uS12.